We begin with the raw amino-acid sequence, 505 residues long: Amidophosphoribosyltransferase (505 aa).

The Nucleophile role is filled by cysteine 2. Residues 2–236 (CGIVGIAGVM…PGEAIYITEE (235 aa)) form the Glutamine amidotransferase type-2 domain. Mg(2+) contacts are provided by threonine 305, aspartate 367, and aspartate 368.

The protein in the C-terminal section; belongs to the purine/pyrimidine phosphoribosyltransferase family. In terms of assembly, homotetramer. It depends on Mg(2+) as a cofactor.

The enzyme catalyses 5-phospho-beta-D-ribosylamine + L-glutamate + diphosphate = 5-phospho-alpha-D-ribose 1-diphosphate + L-glutamine + H2O. It participates in purine metabolism; IMP biosynthesis via de novo pathway; N(1)-(5-phospho-D-ribosyl)glycinamide from 5-phospho-alpha-D-ribose 1-diphosphate: step 1/2. With respect to regulation, inhibited by iodoacetamide and by the glutamine analogs chloroketone and DON. In terms of biological role, catalyzes the formation of phosphoribosylamine from phosphoribosylpyrophosphate (PRPP) and glutamine. Can also use NH(3) in place of glutamine. The protein is Amidophosphoribosyltransferase of Escherichia coli (strain K12).